The chain runs to 441 residues: 23S rRNA (uracil(1939)-C(5))-methyltransferase RlmD (441 aa).

The 59-residue stretch at 10 to 68 (KPLKQQSLVLDITAMDHHGRGIAKHNNKVCFVSNALPNEQVKATIIADKARYSEAQTHK) folds into the TRAM domain. [4Fe-4S] cluster-binding residues include Cys-81, Cys-87, Cys-90, and Cys-169. The S-adenosyl-L-methionine site is built by Gln-274, Phe-303, Asn-308, Glu-324, Asp-351, and Asp-372. Cys-398 serves as the catalytic Nucleophile.

It belongs to the class I-like SAM-binding methyltransferase superfamily. RNA M5U methyltransferase family. RlmD subfamily.

The enzyme catalyses uridine(1939) in 23S rRNA + S-adenosyl-L-methionine = 5-methyluridine(1939) in 23S rRNA + S-adenosyl-L-homocysteine + H(+). Its function is as follows. Catalyzes the formation of 5-methyl-uridine at position 1939 (m5U1939) in 23S rRNA. The protein is 23S rRNA (uracil(1939)-C(5))-methyltransferase RlmD of Pseudoalteromonas translucida (strain TAC 125).